Reading from the N-terminus, the 315-residue chain is Small ribosomal subunit biogenesis GTPase RsgA (315 aa).

The CP-type G domain occupies 79–243; sequence LSKESHILGA…LIDTPGIKGF (165 aa). GTP-binding positions include 128–131 and 182–190; these read NKID and GHSGVGKSS. Zn(2+) is bound by residues cysteine 267, cysteine 272, histidine 274, and cysteine 280.

Belongs to the TRAFAC class YlqF/YawG GTPase family. RsgA subfamily. Monomer. Associates with 30S ribosomal subunit, binds 16S rRNA. The cofactor is Zn(2+).

The protein localises to the cytoplasm. In terms of biological role, one of several proteins that assist in the late maturation steps of the functional core of the 30S ribosomal subunit. Helps release RbfA from mature subunits. May play a role in the assembly of ribosomal proteins into the subunit. Circularly permuted GTPase that catalyzes slow GTP hydrolysis, GTPase activity is stimulated by the 30S ribosomal subunit. In Porphyromonas gingivalis (strain ATCC 33277 / DSM 20709 / CIP 103683 / JCM 12257 / NCTC 11834 / 2561), this protein is Small ribosomal subunit biogenesis GTPase RsgA.